Here is a 198-residue protein sequence, read N- to C-terminus: Nucleoid occlusion factor SlmA (198 aa).

Residues Asn-10–Leu-70 form the HTH tetR-type domain. The segment at residues Thr-33–Phe-52 is a DNA-binding region (H-T-H motif). Residues Glu-117 to Arg-144 adopt a coiled-coil conformation.

It belongs to the nucleoid occlusion factor SlmA family. Homodimer. Interacts with FtsZ.

The protein localises to the cytoplasm. It is found in the nucleoid. Functionally, required for nucleoid occlusion (NO) phenomenon, which prevents Z-ring formation and cell division over the nucleoid. Acts as a DNA-associated cell division inhibitor that binds simultaneously chromosomal DNA and FtsZ, and disrupts the assembly of FtsZ polymers. SlmA-DNA-binding sequences (SBS) are dispersed on non-Ter regions of the chromosome, preventing FtsZ polymerization at these regions. This Escherichia coli O45:K1 (strain S88 / ExPEC) protein is Nucleoid occlusion factor SlmA.